Reading from the N-terminus, the 418-residue chain is Acyltransferase calJ (418 aa).

S79 acts as the Acyl-ester intermediate in catalysis. Residues R176 and Y191 each coordinate substrate.

The protein belongs to the class-A beta-lactamase family.

It functions in the pathway secondary metabolite biosynthesis. Functionally, acyltransferase; part of the gene cluster that mediates the biosynthesis of calbistrin A and related compounds. Calbistrin A is a secondary metabolite with an interesting structure that was recently found to have bioactivity against leukemia cells. It consists of two polyketides linked by an ester bond: a bicyclic decalin containing polyketide and a linear 12 carbon dioic acid structure. The polyketide synthase calA is probably responsible for forming the decalin moiety. Because calA lacks a designated enoylreductase (ER) domain, the required activity is provided by the trans-enoyl reductase calK. Following release from the PKS, calF then probably catalyzes the oxidation and the subsequent Diels Alder cycloisomerization that lead to the formation of the decalin moiety. The decalin polyketide backbone includes two C-methyl groups, at C7 and C11 in backbone, of which the C7 position is probably methylated by the methyltransferase domain of calA. A candidate for adding the methyl group at C11, if not done by CalA, is the cluster methyltransferase calH. Several additional tailoring enzymes within the cluster could be involved in the modification of the decalin polyketide product. Those include the 3 cytochrome P450 monooxygenases CalE, CalG and CalL, of which one might be responsible for the introduction of the extra hydroxyl group attached to the backbone of the decalin moiety, at position C9 in the backbone, that allows for attachment of the linear moiety. One tailoring enzyme activity that is expected to be involved in biosynthesis of calbistrin is an acyltransferase for connecting the two polyketide synthase products, and which could be performed by the cluster acyltransferase calJ. The enzyme responsible for the biosynthesis of the linear moiety, probably a second PKS, has not been identified yet. This is Acyltransferase calJ from Penicillium decumbens.